We begin with the raw amino-acid sequence, 558 residues long: Aurovertin biosynthesis cluster transcription factor aurF (558 aa).

The protein belongs to the POU transcription factor family. Class-3 subfamily.

The protein localises to the nucleus. Transcription factor that regulates the expression of the gene cluster that mediates the biosynthesis of aurovertins, fungal polyketides that exhibit potent inhibition of adenosine triphosphate synthase. This chain is Aurovertin biosynthesis cluster transcription factor aurF, found in Calcarisporium arbuscula (Dendryphion arbuscula).